A 537-amino-acid polypeptide reads, in one-letter code: Probable glucomannan 4-beta-mannosyltransferase 15 (537 aa).

Residues 50 to 70 (FIVPLFKCIVVMCLIISLLVF) traverse the membrane as a helical segment. Asp-150 is a catalytic residue. Positions 209 and 211 each coordinate substrate. The active site involves Asp-303. 4 helical membrane-spanning segments follow: residues 382 to 402 (IVVH…SVFL), 418 to 438 (VITL…IFWV), 494 to 514 (EMMM…FGNA), and 515 to 535 (FLYL…VGFV).

This sequence belongs to the glycosyltransferase 2 family. Plant cellulose synthase-like A subfamily.

The protein localises to the golgi apparatus membrane. It carries out the reaction GDP-mannose + (glucomannan)n = GDP + (glucomannan)n+1.. Its function is as follows. Probable mannan synthase which consists of a 4-beta-mannosyltransferase activity on mannan using GDP-mannose. The beta-1,4-mannan product is the backbone for galactomannan synthesis by galactomannan galactosyltransferase. Galactomannan is a noncellulosic polysaccharides of plant cell wall. The protein is Probable glucomannan 4-beta-mannosyltransferase 15 of Arabidopsis thaliana (Mouse-ear cress).